The following is a 361-amino-acid chain: 3-dehydroquinate synthase (361 aa).

NAD(+) is bound by residues 72–77 (SGEKEK), 130–131 (TT), Lys-142, and Lys-151. Residues Glu-184, His-247, and His-264 each coordinate Zn(2+).

This sequence belongs to the sugar phosphate cyclases superfamily. Dehydroquinate synthase family. It depends on NAD(+) as a cofactor. Co(2+) serves as cofactor. The cofactor is Zn(2+).

It is found in the cytoplasm. The catalysed reaction is 7-phospho-2-dehydro-3-deoxy-D-arabino-heptonate = 3-dehydroquinate + phosphate. It participates in metabolic intermediate biosynthesis; chorismate biosynthesis; chorismate from D-erythrose 4-phosphate and phosphoenolpyruvate: step 2/7. In terms of biological role, catalyzes the conversion of 3-deoxy-D-arabino-heptulosonate 7-phosphate (DAHP) to dehydroquinate (DHQ). The chain is 3-dehydroquinate synthase from Bacillus cereus (strain ATCC 14579 / DSM 31 / CCUG 7414 / JCM 2152 / NBRC 15305 / NCIMB 9373 / NCTC 2599 / NRRL B-3711).